Here is a 205-residue protein sequence, read N- to C-terminus: Small ribosomal subunit protein uS4 (205 aa).

A disordered region spans residues 26–46 (PVNRREYGPGQHGQRRKQKPS). The S4 RNA-binding domain maps to 94–157 (RRLDAVVYRL…KQLAIVLDAV (64 aa)).

It belongs to the universal ribosomal protein uS4 family. As to quaternary structure, part of the 30S ribosomal subunit. Contacts protein S5. The interaction surface between S4 and S5 is involved in control of translational fidelity.

Its function is as follows. One of the primary rRNA binding proteins, it binds directly to 16S rRNA where it nucleates assembly of the body of the 30S subunit. With S5 and S12 plays an important role in translational accuracy. The sequence is that of Small ribosomal subunit protein uS4 from Gluconobacter oxydans (strain 621H) (Gluconobacter suboxydans).